The following is a 119-amino-acid chain: Large ribosomal subunit protein bL20 (119 aa).

It belongs to the bacterial ribosomal protein bL20 family.

Binds directly to 23S ribosomal RNA and is necessary for the in vitro assembly process of the 50S ribosomal subunit. It is not involved in the protein synthesizing functions of that subunit. In Halorhodospira halophila (strain DSM 244 / SL1) (Ectothiorhodospira halophila (strain DSM 244 / SL1)), this protein is Large ribosomal subunit protein bL20.